The sequence spans 357 residues: Uroporphyrinogen decarboxylase (357 aa).

Residues 27–31 (RQAGR), D77, Y154, S209, and H330 contribute to the substrate site.

Belongs to the uroporphyrinogen decarboxylase family. As to quaternary structure, homodimer.

The protein resides in the cytoplasm. The catalysed reaction is uroporphyrinogen III + 4 H(+) = coproporphyrinogen III + 4 CO2. Its pathway is porphyrin-containing compound metabolism; protoporphyrin-IX biosynthesis; coproporphyrinogen-III from 5-aminolevulinate: step 4/4. Its function is as follows. Catalyzes the decarboxylation of four acetate groups of uroporphyrinogen-III to yield coproporphyrinogen-III. In Acinetobacter baumannii (strain ATCC 17978 / DSM 105126 / CIP 53.77 / LMG 1025 / NCDC KC755 / 5377), this protein is Uroporphyrinogen decarboxylase.